We begin with the raw amino-acid sequence, 1433 residues long: Probable ATP-dependent RNA helicase spindle-E (1433 aa).

Positions 76-98 (NRTLDELDSDDEEENMQEQPSVR) are disordered. The segment covering 81–91 (ELDSDDEEENM) has biased composition (acidic residues). The region spanning 127-294 (MKAIRENPVV…FATSSAFPPV (168 aa)) is the Helicase ATP-binding domain. 140–147 (GETGCGKT) contacts ATP. Residues 240 to 243 (DEVH) carry the DEAH box motif. The 173-residue stretch at 354-526 (QSLQSYEEAK…NSVLKAKELE (173 aa)) folds into the Helicase C-terminal domain. One can recognise a Tudor domain in the interval 937–1000 (ASAVTKGLQL…RLMPHELKRD (64 aa)).

The protein belongs to the DEAD box helicase family. DEAH subfamily.

Its subcellular location is the cytoplasm. It carries out the reaction ATP + H2O = ADP + phosphate + H(+). Its function is as follows. Probable ATP-binding RNA helicase which plays a central role during spermatogenesis and oogenesis by repressing transposable elements and preventing their mobilization, which is essential for the germline integrity. Acts via the piRNA metabolic process, which mediates the repression of transposable elements during meiosis by forming complexes composed of piRNAs and Piwi and govern the methylation and subsequent repression of transposons. Involved in the repression of LTR retrotransposon copia. Also involved in telomere regulation by repressing specialized telomeric retroelements HeT-A, TAHRE, and TART; Drosophila telomeres being maintained by transposition of specialized telomeric retroelements. Involved in telomeric trans-silencing, a repression mechanism by which a transposon or a transgene inserted in subtelomeric heterochromatin has the capacity to repress in trans in the female germline, a homologous transposon, or transgene located in euchromatin. Involved in the repression of testis-expressed Stellate genes by the homologous Su(Ste) repeats. Required for anteroposterior and dorsoventral axis formation during oogenesis. This is Probable ATP-dependent RNA helicase spindle-E (spn-E) from Drosophila virilis (Fruit fly).